The following is a 633-amino-acid chain: Dynein axonemal assembly factor 1 (633 aa).

The disordered stretch occupies residues 1–80 (MHPEASEPPV…SRDDRDDRGP (80 aa)). The segment covering 22–42 (AGDHGDAGPGVRKEEINETKE) has biased composition (basic and acidic residues). A compositionally biased stretch (low complexity) spans 46-60 (GPCTTSCQSQQQPSG). The segment covering 70–80 (HSRDDRDDRGP) has biased composition (basic and acidic residues). LRR repeat units lie at residues 101 to 123 (ALND…EEYT), 124 to 145 (GLRC…QAQS), 146 to 167 (ELRC…EPLQ), 168 to 189 (KLDA…SCLP), 190 to 211 (VLNT…EHLR), and 215 to 236 (QLCV…SVLE). The region spanning 249 to 288 (NPVTKHIPNYRRTVTVRLKHLTYLDDRPVFPKDRACAEAW) is the LRRCT domain. Positions 326-344 (EERKKARDRGETPLPESEK) are enriched in basic and acidic residues. Disordered regions lie at residues 326-364 (EERK…TQQK) and 404-436 (LSGN…RTED). At serine 349 the chain carries Phosphoserine. Basic and acidic residues predominate over residues 352–364 (AQEKPPKGETQQK). The span at 413–427 (TPVVVTPEEVTSPVE) shows a compositional bias: low complexity. Threonine 462 is subject to Phosphothreonine. 2 positions are modified to phosphoserine: serine 465 and serine 488. Composition is skewed to polar residues over residues 538–555 (TTDL…SSHP) and 568–592 (GESN…SEGG). A disordered region spans residues 538-633 (TTDLETQSQD…GLEDIEFGLD (96 aa)).

The protein belongs to the DNAAF1 family.

It localises to the cell projection. Its subcellular location is the cilium. Functionally, cilium-specific protein required for the stability of the ciliary architecture. Plays a role in cytoplasmic preassembly of dynein arms. Involved in regulation of microtubule-based cilia and actin-based brush border microvilli. The protein is Dynein axonemal assembly factor 1 (Dnaaf1) of Rattus norvegicus (Rat).